Reading from the N-terminus, the 458-residue chain is Phosphoglucosamine mutase (458 aa).

Serine 106 serves as the catalytic Phosphoserine intermediate. Mg(2+)-binding residues include serine 106, aspartate 247, aspartate 249, and aspartate 251. Position 106 is a phosphoserine (serine 106).

It belongs to the phosphohexose mutase family. It depends on Mg(2+) as a cofactor. In terms of processing, activated by phosphorylation.

It catalyses the reaction alpha-D-glucosamine 1-phosphate = D-glucosamine 6-phosphate. Functionally, catalyzes the conversion of glucosamine-6-phosphate to glucosamine-1-phosphate. In Chlamydia caviae (strain ATCC VR-813 / DSM 19441 / 03DC25 / GPIC) (Chlamydophila caviae), this protein is Phosphoglucosamine mutase.